We begin with the raw amino-acid sequence, 507 residues long: Histidine ammonia-lyase (507 aa).

The 5-imidazolinone (Ala-Gly) cross-link spans 141–143; that stretch reads ASG. 2,3-didehydroalanine (Ser) is present on Ser142.

Belongs to the PAL/histidase family. Post-translationally, contains an active site 4-methylidene-imidazol-5-one (MIO), which is formed autocatalytically by cyclization and dehydration of residues Ala-Ser-Gly.

The protein localises to the cytoplasm. It carries out the reaction L-histidine = trans-urocanate + NH4(+). It functions in the pathway amino-acid degradation; L-histidine degradation into L-glutamate; N-formimidoyl-L-glutamate from L-histidine: step 1/3. In Burkholderia pseudomallei (strain 1106a), this protein is Histidine ammonia-lyase.